A 536-amino-acid chain; its full sequence is MTSLAILPQLKRTITDIMDEELYQSPSSPNSMTSFPSGTGNLMSNTNHNTFNQSNNTPFNMNYNHISNRNSINSSPNLSATTFNNANNLGNVLNIPDSFLEQLASQDYIDHLKSQQQQEQAFENPDDIYVQDVHENQVNPFNDYGNPDSFIRAQEQQSQLPQPQQPISQQDKQRPQSQQQQATKAPLPQAFPTRRRRKITLLNDIGGSSTRKKHFDEDYLLYNPDISPGHIVTDCSLDSSLVIPPNSNELFLTESESPEFANDIIPGYENDYLFLDDDDEQIEEDVSDDEGDNYFQVDEDFDDYLMNNNGYDGYPTFNNYESSGNNTDIINNNNNIVDETISDANSNSELEVVFDQPKEVSPSAISPASPDSDDMMIDVEDETEIADATAAKEEINKKHSKSGKKESKSQKENQLTTTTKSKKHSHGISGAEITLNNPNHQCNLINPSTGEPCNKQFSRPYDLIRHQDTIHASMKKIFRCVICEGRLNGGPGNGKEKTFSRGDALSRHIKIKHGLVGQDALDLINEAKENVEYIPV.

Low complexity-rich tracts occupy residues 154-181 and 361-370; these read QEQQ…QQQQ and SPSAISPASP. Disordered stretches follow at residues 154-196, 353-375, and 393-434; these read QEQQ…TRRR, VFDQ…SDDM, and EEIN…AEIT. The span at 393–411 shows a compositional bias: basic and acidic residues; the sequence is EEINKKHSKSGKKESKSQK. Residues 440–471 form a C2H2-type zinc finger; sequence HQCNLINPSTGEPCNKQFSRPYDLIRHQDTIH.

The protein resides in the nucleus. In terms of biological role, transcriptional activator of a number of genes encoding proteasomal subunits. Binds to the DNA sequence 5'-GAAGGCAAAA-3', enriched in regions upstream of proteasome genes. This chain is Transcriptional regulator RPN4 (RPN4), found in Candida albicans (strain SC5314 / ATCC MYA-2876) (Yeast).